The chain runs to 755 residues: Polyribonucleotide nucleotidyltransferase (755 aa).

Mg(2+)-binding residues include D545 and D551. Positions 611 to 670 constitute a KH domain; that stretch reads PRITAITVPVNKIGEVIGPKGKTINSITEETGANISIEEDGTVYVSAASGAAAEAAIEKI. Residues 682-751 enclose the S1 motif domain; sequence GERFLGTVVK…NRGKISLAPV (70 aa).

The protein belongs to the polyribonucleotide nucleotidyltransferase family. The cofactor is Mg(2+).

It localises to the cytoplasm. The catalysed reaction is RNA(n+1) + phosphate = RNA(n) + a ribonucleoside 5'-diphosphate. In terms of biological role, involved in mRNA degradation. Catalyzes the phosphorolysis of single-stranded polyribonucleotides processively in the 3'- to 5'-direction. The polypeptide is Polyribonucleotide nucleotidyltransferase (Corynebacterium diphtheriae (strain ATCC 700971 / NCTC 13129 / Biotype gravis)).